A 624-amino-acid chain; its full sequence is Glutaminase 2 (624 aa).

Residues 1–20 are disordered; sequence MDTQPIRLPSVAGATRSAGY. A glutaminase region spans residues 43 to 325; the sequence is GELADYIPEL…LSARFDLHML (283 aa). The substrate site is built by Ser-85, Asn-134, Glu-178, Asn-185, Tyr-209, Tyr-261, and Val-279. Residues 355 to 466 form the STAS domain; the sequence is QQILDERHSD…ALLDDAIEWA (112 aa). A nucleoside 3',5'-cyclic phosphate is bound at residue 491 to 608; it reads LLAELDTDEI…IMRNLAAILA (118 aa).

This sequence belongs to the glutaminase family. In terms of assembly, homotetramer.

It carries out the reaction L-glutamine + H2O = L-glutamate + NH4(+). This Bradyrhizobium diazoefficiens (strain JCM 10833 / BCRC 13528 / IAM 13628 / NBRC 14792 / USDA 110) protein is Glutaminase 2 (glsA2).